Reading from the N-terminus, the 559-residue chain is Phosphoinositide 3-phosphatase (559 aa).

The 422-residue stretch at 120 to 541 (SWKSFLLENE…SSLRWWSASF (422 aa)) folds into the Myotubularin phosphatase domain. Cys-342 serves as the catalytic Phosphocysteine intermediate.

Belongs to the protein-tyrosine phosphatase family. Non-receptor class myotubularin subfamily.

It is found in the cytoplasm. The catalysed reaction is a 1,2-diacyl-sn-glycero-3-phospho-(1D-myo-inositol-3-phosphate) + H2O = a 1,2-diacyl-sn-glycero-3-phospho-(1D-myo-inositol) + phosphate. Functionally, lipid phosphatase which dephosphorylates phosphatidylinositol 3-monophosphate (PI3P). Involved in the control of PI3P-dependent signaling and in the maintenance of endosomal system integrity. The protein is Phosphoinositide 3-phosphatase of Schizosaccharomyces pombe (strain 972 / ATCC 24843) (Fission yeast).